The primary structure comprises 163 residues: MLRQLRLTMDISGWIFLPWRRSMSNMKDSPPPPPPLASTFDDVIVDYEDPDYLPLPEYPVRPNEPLETRKQRLLYQSRKRGMLENDLLLSTFAAKHLQNFSAEQTAQYDQLINGVSNDWDIYYWATEVKPTPKEYDTEIMGLLKEHVKNAERVTRLRQPDLNA.

The transit peptide at 1 to 23 (MLRQLRLTMDISGWIFLPWRRSM) directs the protein to the mitochondrion.

The protein belongs to the SDHAF2 family. As to quaternary structure, interacts with the flavoprotein subunit within the SDH catalytic dimer.

Its subcellular location is the mitochondrion matrix. Plays an essential role in the assembly of succinate dehydrogenase (SDH), an enzyme complex (also referred to as respiratory complex II) that is a component of both the tricarboxylic acid (TCA) cycle and the mitochondrial electron transport chain, and which couples the oxidation of succinate to fumarate with the reduction of ubiquinone (coenzyme Q) to ubiquinol. Required for flavinylation (covalent attachment of FAD) of the flavoprotein subunit of the SDH catalytic dimer. This Drosophila sechellia (Fruit fly) protein is Succinate dehydrogenase assembly factor 2-A, mitochondrial.